The sequence spans 215 residues: Elongation factor Ts (215 aa).

Residues T80–V83 are involved in Mg(2+) ion dislocation from EF-Tu.

It belongs to the EF-Ts family.

The protein localises to the cytoplasm. Functionally, associates with the EF-Tu.GDP complex and induces the exchange of GDP to GTP. It remains bound to the aminoacyl-tRNA.EF-Tu.GTP complex up to the GTP hydrolysis stage on the ribosome. The sequence is that of Elongation factor Ts from Alkaliphilus metalliredigens (strain QYMF).